The following is a 336-amino-acid chain: Alpha-N-acetylgalactosaminide alpha-2,6-sialyltransferase 5 (336 aa).

Residues 1–8 (MKTLMRHG) lie on the Cytoplasmic side of the membrane. Residues 9 to 29 (LAVCLALTTMCTSLLLVYSSL) form a helical; Signal-anchor for type II membrane protein membrane-spanning segment. Residues 30–336 (GGQKERPPQQ…INHPENKPVF (307 aa)) are Lumenal-facing. A disordered region spans residues 32-81 (QKERPPQQQQQQQQQQQQASATGSSQPAAESSTQQRPGVPAGPRPLDGYL). Positions 38–49 (QQQQQQQQQQQQ) are enriched in low complexity. The span at 50–67 (ASATGSSQPAAESSTQQR) shows a compositional bias: polar residues. Cysteines 96 and 245 form a disulfide. 2 N-linked (GlcNAc...) asparagine glycosylation sites follow: Asn-137 and Asn-161.

The protein belongs to the glycosyltransferase 29 family.

It is found in the golgi apparatus membrane. The catalysed reaction is a ganglioside GM1b (d18:1(4E)) + CMP-N-acetyl-beta-neuraminate = a ganglioside GD1alpha (d18:1(4E)) + CMP + H(+). It catalyses the reaction N-acetyl-alpha-neuraminosyl-(2-&gt;3)-beta-D-galactosyl-(1-&gt;3)-N-acetyl-beta-D-glucosaminyl-(1-&gt;3)-beta-D-galactosyl-(1-&gt;4)-beta-D-glucosyl-(1&lt;-&gt;1')-N-acyl-sphing-4-enine + CMP-N-acetyl-beta-neuraminate = N-acetyl-alpha-neuraminosyl-(2-&gt;3)-beta-D-galactosyl-(1-&gt;3)-[N-acetyl-alpha-neuraminosyl-(2-&gt;6)]-N-acetyl-beta-D-glucosaminyl-(1-&gt;3)-beta-D-galactosyl-(1-&gt;4)-beta-D-glucosyl-(1&lt;-&gt;1')-N-acyl-sphing-4-enine + CMP + H(+). It participates in glycolipid biosynthesis. Its function is as follows. Predominantly catalyzes the biosynthesis of ganglioside GD1alpha from GM1b in the brain, by transferring the sialyl group (N-acetyl-alpha-neuraminyl or NeuAc) from CMP-NeuAc to the GalNAc residue on the NeuAc-alpha-2,3-Gal-beta-1,3-GalNAc sequence of GM1b. GD1alpha is a critical molecule in the communication and interaction between neuronal cells and their supportive cells, particularly in brain tissues, and functions as an adhesion molecule in the process of metastasis. Also shows activity towards sialyl Lc4Cer (N-acetyl-alpha-neuraminosyl-(2-&gt;3)-beta-D-galactosyl-(1-&gt;3)-N-acetyl-beta-D-glucosaminyl-(1-&gt;3)-beta-D-galactosyl-(1-&gt;4)-beta-D-glucosyl-(1&lt;-&gt;1')-N-acyl-sphing-4-enine) generating disialyl Lc4Cer, which can lead to the synthesis of disialyl Lewis a (Le(a)), suggested to be a cancer-associated antigen. This is Alpha-N-acetylgalactosaminide alpha-2,6-sialyltransferase 5 (ST6GALNAC5) from Homo sapiens (Human).